The chain runs to 147 residues: Endoribonuclease YbeY (147 aa).

3 residues coordinate Zn(2+): H107, H111, and H117.

This sequence belongs to the endoribonuclease YbeY family. The cofactor is Zn(2+).

It is found in the cytoplasm. In terms of biological role, single strand-specific metallo-endoribonuclease involved in late-stage 70S ribosome quality control and in maturation of the 3' terminus of the 16S rRNA. The polypeptide is Endoribonuclease YbeY (Solibacter usitatus (strain Ellin6076)).